Consider the following 789-residue polypeptide: E3 UFM1-protein ligase 1 (789 aa).

Residues 2–212 are required for E3 UFM1-protein ligase activity; sequence AADWEEIRRL…VSNLITRYGF (211 aa). 2 disordered regions span residues 407–470 and 743–763; these read LENS…TGRN and SKKA…ADTI. Positions 444–453 are enriched in basic residues; that stretch reads KIKKTKKKGR. Over residues 748–760 the composition is skewed to acidic residues; the sequence is QEDDNKTEEEEGA.

It belongs to the UFL1 family. Catalytic component of the UFM1 ribosome E3 ligase (UREL) complex. Interacts with E2-like enzyme UFC1.

Its subcellular location is the endoplasmic reticulum membrane. It is found in the cytoplasm. The protein resides in the cytosol. It localises to the nucleus. The protein localises to the chromosome. In terms of biological role, E3 protein ligase that mediates ufmylation, the covalent attachment of the ubiquitin-like modifier UFM1 to lysine residues on target proteins, and which plays a key role in various processes, such as ribosome recycling, response to DNA damage, interferon response or reticulophagy (also called ER-phagy). As part of the UREL complex, plays a key role in ribosome recycling by catalyzing mono-ufmylation of RPL26/uL24 subunit of the 60S ribosome. Ufmylation of RPL26/uL24 occurs on free 60S ribosomes following ribosome dissociation: it weakens the junction between post-termination 60S subunits and SEC61 translocons, promoting release and recycling of the large ribosomal subunit from the endoplasmic reticulum membrane. Ufmylation of RPL26/uL24 and subsequent 60S ribosome recycling either take place after normal termination of translation or after ribosome stalling during cotranslational translocation at the endoplasmic reticulum. Involved in reticulophagy in response to endoplasmic reticulum stress by mediating ufmylation of proteins such as CYB5R3 and RPN1, thereby promoting lysosomal degradation of ufmylated proteins. Ufmylation in response to endoplasmic reticulum stress is essential for processes such as hematopoiesis, blood vessel morphogenesis or inflammatory response. The polypeptide is E3 UFM1-protein ligase 1 (Gallus gallus (Chicken)).